A 553-amino-acid chain; its full sequence is Sulfatase (553 aa).

Residues Met1–Ser25 form the signal peptide. Positions 43, 44, and 88 each coordinate Ca(2+). Cys88 (nucleophile) is an active-site residue. Cys88 is subject to 3-oxoalanine (Cys). His159 is an active-site residue. Residues Asp350 and Asn351 each contribute to the Ca(2+) site.

Belongs to the sulfatase family. The cofactor is Ca(2+). The conversion to 3-oxoalanine (also known as C-formylglycine, FGly), of a serine or cysteine residue in prokaryotes and of a cysteine residue in eukaryotes, is critical for catalytic activity. This post-translational modification is severely defective in multiple sulfatase deficiency (MSD).

It localises to the secreted. Sulfatase that may be involved in ulvan degradation. Ulvan is the main polysaccharide component of the Ulvales (green seaweed) cell wall. It is composed of disaccharide building blocks comprising 3-sulfated rhamnose (Rha3S) linked to D-glucuronic acid (GlcA), L-iduronic acid (IduA), or D-xylose (Xyl). The protein is Sulfatase of Formosa agariphila (strain DSM 15362 / KCTC 12365 / LMG 23005 / KMM 3901 / M-2Alg 35-1).